The primary structure comprises 471 residues: Ribonuclease 3 (471 aa).

A compositionally biased stretch (basic residues) spans M1–K10. Disordered stretches follow at residues M1 to I29 and N168 to A189. Residues E20–I29 show a composition bias toward polar residues. A compositionally biased stretch (acidic residues) spans K172–Y184. The RNase III domain maps to L227 to P331. Positions N369–M437 constitute a DRBM domain. The segment at S451–S471 is disordered. Over residues K461–S471 the composition is skewed to basic residues.

It catalyses the reaction Endonucleolytic cleavage to 5'-phosphomonoester.. In terms of biological role, dsRNA-specific nuclease that cleaves eukaryotic pre-ribosomal RNA at the U3 snoRNP-dependent A0 site in the 5'-external transcribed spacer (ETS) and in the 3'-ETS. In vitro, cleaves synthetic 5'-ETS RNA A0 site in the absence of snoRNA or other factors. Has an essential growth function in addition to pre-rRNA processing. The protein is Ribonuclease 3 (RNT1) of Saccharomyces cerevisiae (strain ATCC 204508 / S288c) (Baker's yeast).